The sequence spans 668 residues: Bifunctional polymyxin resistance protein ArnA (668 aa).

Residues 1–307 (MSNKAVVFAY…ELGLVDGSLL (307 aa)) form a formyltransferase ArnAFT region. H106 functions as the Proton donor; for formyltransferase activity in the catalytic mechanism. Residues R116 and 138 to 142 (VKRAD) contribute to the (6R)-10-formyltetrahydrofolate site. The dehydrogenase ArnADH stretch occupies residues 317–668 (RRTRVLILGV…IADRAKQEAR (352 aa)). NAD(+) contacts are provided by residues D350 and 371-372 (DI). UDP-alpha-D-glucuronate contacts are provided by residues A396, Y401, and 435–436 (TS). The active-site Proton acceptor; for decarboxylase activity is the E437. Residues R463, N494, 528-537 (RLFDGGEQKR), and Y615 contribute to the UDP-alpha-D-glucuronate site. Catalysis depends on R621, which acts as the Proton donor; for decarboxylase activity.

This sequence in the N-terminal section; belongs to the Fmt family. UDP-L-Ara4N formyltransferase subfamily. It in the C-terminal section; belongs to the NAD(P)-dependent epimerase/dehydratase family. UDP-glucuronic acid decarboxylase subfamily. Homohexamer, formed by a dimer of trimers.

The catalysed reaction is UDP-alpha-D-glucuronate + NAD(+) = UDP-beta-L-threo-pentopyranos-4-ulose + CO2 + NADH. It catalyses the reaction UDP-4-amino-4-deoxy-beta-L-arabinose + (6R)-10-formyltetrahydrofolate = UDP-4-deoxy-4-formamido-beta-L-arabinose + (6S)-5,6,7,8-tetrahydrofolate + H(+). The protein operates within nucleotide-sugar biosynthesis; UDP-4-deoxy-4-formamido-beta-L-arabinose biosynthesis; UDP-4-deoxy-4-formamido-beta-L-arabinose from UDP-alpha-D-glucuronate: step 1/3. Its pathway is nucleotide-sugar biosynthesis; UDP-4-deoxy-4-formamido-beta-L-arabinose biosynthesis; UDP-4-deoxy-4-formamido-beta-L-arabinose from UDP-alpha-D-glucuronate: step 3/3. It participates in bacterial outer membrane biogenesis; lipopolysaccharide biosynthesis. In terms of biological role, bifunctional enzyme that catalyzes the oxidative decarboxylation of UDP-glucuronic acid (UDP-GlcUA) to UDP-4-keto-arabinose (UDP-Ara4O) and the addition of a formyl group to UDP-4-amino-4-deoxy-L-arabinose (UDP-L-Ara4N) to form UDP-L-4-formamido-arabinose (UDP-L-Ara4FN). The modified arabinose is attached to lipid A and is required for resistance to polymyxin and cationic antimicrobial peptides. In Pseudomonas fluorescens (strain ATCC BAA-477 / NRRL B-23932 / Pf-5), this protein is Bifunctional polymyxin resistance protein ArnA.